We begin with the raw amino-acid sequence, 518 residues long: Lysine--tRNA ligase (518 aa).

The Mg(2+) site is built by glutamate 407 and glutamate 414.

Belongs to the class-II aminoacyl-tRNA synthetase family. As to quaternary structure, homodimer. It depends on Mg(2+) as a cofactor.

Its subcellular location is the cytoplasm. The catalysed reaction is tRNA(Lys) + L-lysine + ATP = L-lysyl-tRNA(Lys) + AMP + diphosphate. The chain is Lysine--tRNA ligase from Helicobacter hepaticus (strain ATCC 51449 / 3B1).